Consider the following 359-residue polypeptide: Fructose-bisphosphate aldolase 1 (359 aa).

Ser50 serves as a coordination point for D-glyceraldehyde 3-phosphate. Residue Asp83 is the Proton donor of the active site. Residues His84, Asp105, Glu142, and His198 each contribute to the Zn(2+) site. Gly199 is a dihydroxyacetone phosphate binding site. His232 is a binding site for Zn(2+). Residues 233 to 235 and 275 to 278 contribute to the dihydroxyacetone phosphate site; these read GSS and NIDT.

The protein belongs to the class II fructose-bisphosphate aldolase family. Homodimer. Requires Zn(2+) as cofactor.

The enzyme catalyses beta-D-fructose 1,6-bisphosphate = D-glyceraldehyde 3-phosphate + dihydroxyacetone phosphate. It participates in carbohydrate biosynthesis; Calvin cycle. It functions in the pathway carbohydrate degradation; glycolysis; D-glyceraldehyde 3-phosphate and glycerone phosphate from D-glucose: step 4/4. In terms of biological role, catalyzes the aldol condensation of dihydroxyacetone phosphate (DHAP or glycerone-phosphate) with glyceraldehyde 3-phosphate (G3P) to form fructose 1,6-bisphosphate (FBP) in gluconeogenesis and the reverse reaction in glycolysis. The sequence is that of Fructose-bisphosphate aldolase 1 (cfxA) from Cereibacter sphaeroides (Rhodobacter sphaeroides).